We begin with the raw amino-acid sequence, 692 residues long: MGREFSLENTRNIGIMAHIDAGKTTATERILYYTGRIHKIGETHEGASQMDWMEQEQERGITITSAATTAQWKGHRVNIIDTPGHVDFTVEVERSLRVLDGAVAVLDAQSGVEPQTETVWRQATTYGVPRIVFVNKMDKIGADFLYSVGTIHDRLQANAHPIQLPIGAEDEFNGIIDLVEECAYMYGNDLGTDIQRVEIPEEHKELAEEYRGKLIEAVAELDEEMMMKYLEGEEITVEELKAGIRKATTSVEFFPVICGSAFKNKGVQILLDAVIDYLPSPLDVPAIKGIVPDTDEEVERKSSDEEPFSALAFKIMTDPYVGKLTFFRVYSGVLNSGSYVKNSTKGKRERVGRILQMHANSREEISTVYAGDIAAAVGLKDTTTGDTLCDEKSLVILESMEFPEPVISVAIEPKSKADQDKMGTALAKLSEEDPTFRAHTDQETGQTIIAGMGELHLDIIVDRMRREFKVEANVGAPQVAYRETFRSAAKVEGKFARQSGGRGQFGHVWIEFEPNEEGKGFEFENKIVGGVVPREYIPAVGAGLEDALKNGVLAGYPVVDIKAALVDGSYHDVDSSEMAFKIAASMALKAAVSKCNPVILEPMMKVEVVIPEEYMGDIMGDVTSRRGRVEGMEARGNAQVVRAMVPLSEMFGYATSLRSNTQGRGTFSMVFDHYEEVPKSVSEEIIKKNKGE.

A tr-type G domain is found at 8 to 282 (ENTRNIGIMA…AVIDYLPSPL (275 aa)). Residues 17 to 24 (AHIDAGKT), 81 to 85 (DTPGH), and 135 to 138 (NKMD) contribute to the GTP site.

The protein belongs to the TRAFAC class translation factor GTPase superfamily. Classic translation factor GTPase family. EF-G/EF-2 subfamily.

The protein localises to the cytoplasm. Functionally, catalyzes the GTP-dependent ribosomal translocation step during translation elongation. During this step, the ribosome changes from the pre-translocational (PRE) to the post-translocational (POST) state as the newly formed A-site-bound peptidyl-tRNA and P-site-bound deacylated tRNA move to the P and E sites, respectively. Catalyzes the coordinated movement of the two tRNA molecules, the mRNA and conformational changes in the ribosome. This is Elongation factor G from Bacillus cereus (strain ATCC 10987 / NRS 248).